A 196-amino-acid polypeptide reads, in one-letter code: DnaA initiator-associating protein DiaA (196 aa).

Residues 34 to 196 (LVQSLLNGNK…DSTLFPHQDE (163 aa)) enclose the SIS domain.

Belongs to the SIS family. DiaA subfamily. In terms of assembly, homotetramer; dimer of dimers.

Functionally, required for the timely initiation of chromosomal replication via direct interactions with the DnaA initiator protein. This Serratia proteamaculans (strain 568) protein is DnaA initiator-associating protein DiaA.